A 71-amino-acid chain; its full sequence is 26S proteasome complex subunit rpn15 (71 aa).

Residues Met1–Asp38 form a disordered region. Residues Asn11–Ala22 show a composition bias toward acidic residues. The tract at residues Asp16 to Asn25 is UBS-II. The tract at residues Asp38–Asp49 is UBS-I.

Belongs to the DSS1/SEM1 family. In terms of assembly, interacts with mlo3, rae1, nup98/nup189 and nup146. Interacts with rad24. Interacts (via UBSs) with ubiquitin (ubi3/ubi5).

It is found in the cytoplasm. It localises to the nucleus. In terms of biological role, versatile protein that might stabilize multiple protein complexes involved in diverse pathways. Subunit of the 26S proteasome which plays a role in ubiquitin-dependent proteolysis. Acts as a ubiquitin receptor of the 26S proteasome, by interacting with ubiquitin chains linked by 'Lys-63' and 'Lys-48'. Involved in nuclear export of specific sets of mRNAs. Links the mRNA adapter mlo3 to rae1 for targeting mRNA-protein complex to the proteins of the nucleoporin complex (NPC). Involved in recombinational repair of DNA. Plays a critical role in linking repair and checkpoint factors to damaged DNA sites by specifically recruiting rad24 and cdc25 to the DSBs. This Schizosaccharomyces pombe (strain 972 / ATCC 24843) (Fission yeast) protein is 26S proteasome complex subunit rpn15 (rpn15).